The sequence spans 208 residues: Uracil phosphoribosyltransferase (208 aa).

5-phospho-alpha-D-ribose 1-diphosphate is bound by residues arginine 78, arginine 103, and 130–138; that span reads DPMLATGGS. Uracil is bound by residues isoleucine 193 and 198 to 200; that span reads GDA. Position 199 (aspartate 199) interacts with 5-phospho-alpha-D-ribose 1-diphosphate.

It belongs to the UPRTase family. Mg(2+) serves as cofactor.

The enzyme catalyses UMP + diphosphate = 5-phospho-alpha-D-ribose 1-diphosphate + uracil. The protein operates within pyrimidine metabolism; UMP biosynthesis via salvage pathway; UMP from uracil: step 1/1. Its activity is regulated as follows. Allosterically activated by GTP. Its function is as follows. Catalyzes the conversion of uracil and 5-phospho-alpha-D-ribose 1-diphosphate (PRPP) to UMP and diphosphate. This chain is Uracil phosphoribosyltransferase, found in Shewanella putrefaciens (strain CN-32 / ATCC BAA-453).